A 105-amino-acid polypeptide reads, in one-letter code: Large ribosomal subunit protein eL30 (105 aa).

Belongs to the eukaryotic ribosomal protein eL30 family.

This is Large ribosomal subunit protein eL30 (RPL30) from Trypanosoma brucei brucei.